Reading from the N-terminus, the 44-residue chain is Hyaluronidase CdtHya1 (44 aa).

Belongs to the glycosyl hydrolase 56 family. Monomer. In terms of processing, contains disulfide bonds. Post-translationally, glycosylated. Expressed by the venom gland.

It is found in the secreted. The enzyme catalyses Random hydrolysis of (1-&gt;4)-linkages between N-acetyl-beta-D-glucosamine and D-glucuronate residues in hyaluronate.. Snake venom endo-hyaluronidase that degrades hyaluronan to smaller oligosaccharide fragments. In venom, it is not toxic by itself, but increases the diffusion of other venom proteins such as crotoxin (a neurotoxic and myotoxic PLA2) by degrading the extracellular matrix. In addition, it displays antiedematogenic activity, since it significantly diminishes the oedematogenic activity of crotoxin (probably by direct substrate hydrolysis, since hyaluronan possesses strong water-binding capacity). The sequence is that of Hyaluronidase CdtHya1 from Crotalus durissus terrificus (South American rattlesnake).